Consider the following 749-residue polypeptide: Triacylglycerol lipase 5 (749 aa).

An HXXXXD acyltransferase motif motif is present at residues 54–59 (HAISYD). One can recognise a PNPLA domain in the interval 183–388 (LVLSGGSTFG…DNDMPISRLS (206 aa)). The GXSXG motif lies at 214-218 (GSSAG). The Nucleophile role is filled by S216. N270, N289, N297, N304, and N321 each carry an N-linked (GlcNAc...) asparagine glycan. Residue D375 is the Proton acceptor of the active site. N-linked (GlcNAc...) asparagine glycosylation is found at N474 and N589. The segment at 585-643 (IKSPNKTAAPGRFPLQPLPSPSSTFNKRKMDMLSPSPSPSTSPQRSKSSFTQQGTRQKA) is disordered. The segment covering 623–633 (PSTSPQRSKSS) has biased composition (low complexity). The span at 634–643 (FTQQGTRQKA) shows a compositional bias: polar residues. A Phosphoserine modification is found at S645. N680, N714, and N742 each carry an N-linked (GlcNAc...) asparagine glycan.

Its subcellular location is the lipid droplet. It carries out the reaction a triacylglycerol + H2O = a diacylglycerol + a fatty acid + H(+). The catalysed reaction is 1-(9Z-octadecenoyl)-sn-glycero-3-phosphate + (9Z)-octadecenoyl-CoA = 1,2-di-(9Z-octadecenoyl)-sn-glycero-3-phosphate + CoA. The enzyme catalyses 1-(9Z-octadecenoyl)-sn-glycero-3-phosphate + hexadecanoyl-CoA = 1-hexadecanoyl-2-(9Z-octadecenoyl)-sn-glycero-3-phosphate + CoA. Loses its lipolytic activity in cells lacking nonpolar lipids, but retains its side activity as lysophospholipid acyltransferase. Lipid particle-localized triacylglycerol (TAG) lipase. The lipid droplet/particle is a lipid storage compartment which serves as a depot of energy and building blocks for membrane lipid biosynthesis. Involved in the mobilization of the non-polar storage lipids triacylglycerols (TAGs) from lipid particles by hydrolysis of TAGs, releasing and supplying specific fatty acids to the appropriate metabolic pathways. Also catalyzes the acylation of lysophosphatidic acid (LPA). This chain is Triacylglycerol lipase 5 (TGL5), found in Saccharomyces cerevisiae (strain ATCC 204508 / S288c) (Baker's yeast).